The following is a 1496-amino-acid chain: Chromosome partition protein MukB (1496 aa).

Residue 63–70 (GGNGAGKS) coordinates ATP. 2 coiled-coil regions span residues 328 to 493 (KLEL…QRLS) and 536 to 632 (KMQA…APAW). The interval 694 to 811 (PDGSDDVRLN…EVPLFGRAAR (118 aa)) is flexible hinge. 2 coiled-coil regions span residues 861–1171 (NPEE…SAEE) and 1235–1291 (IDAI…LQNI). The span at 1082–1091 (RARSRRDELQ) shows a compositional bias: basic and acidic residues. Residues 1082-1101 (RARSRRDELQQRLSQQRSRK) form a disordered region.

The protein belongs to the SMC family. MukB subfamily. Homodimerization via its hinge domain. Binds to DNA via its C-terminal region. Interacts, and probably forms a ternary complex, with MukE and MukF via its C-terminal region. The complex formation is stimulated by calcium or magnesium. Interacts with tubulin-related protein FtsZ.

It is found in the cytoplasm. Its subcellular location is the nucleoid. Its function is as follows. Plays a central role in chromosome condensation, segregation and cell cycle progression. Functions as a homodimer, which is essential for chromosome partition. Involved in negative DNA supercoiling in vivo, and by this means organize and compact chromosomes. May achieve or facilitate chromosome segregation by condensation DNA from both sides of a centrally located replisome during cell division. In Actinobacillus pleuropneumoniae serotype 3 (strain JL03), this protein is Chromosome partition protein MukB.